Reading from the N-terminus, the 397-residue chain is MATMEELKLQIETLQSELCKLKATSAGGAREKIEKMSSEVVDSNPYSRLMALQRMGIVSEYERIRQKSVAVVGVGGVGSVTADMLTRCGIGKLILFDYDKVELANMNRLFFTPDQAGLSKVEAAAKTLNFINPDVKILTNNYNITTVESFDKFLNAIKTGGIEEGTPVDLVLSCVDNFEARMAINTACNELSLNWFESGVSENAVSGHIQFIRPGDTACFACAPPLVVAENIDEKTLKREGVCAASLPTTMGIVAGMLVQNTLKYLLNFGTVSDYLGYNALIDFFPKMSLKPNPTCDDRFCIDRQKDYAARPKEERVEEVPEEETPLHEENLYGIELVAEDDTQGSQPSTGTTHSISTGLKLAYEPPASTKHSETTSTTAVSDDVSLDELMAQMKSM.

Positions 76, 97, 120, 143, and 177 each coordinate ATP. Zn(2+) is bound by residues Cys219 and Cys222. Cys243 serves as the catalytic Glycyl thioester intermediate. Cys296 and Cys301 together coordinate Zn(2+). The disordered stretch occupies residues 362-384 (LAYEPPASTKHSETTSTTAVSDD). Positions 375–384 (TTSTTAVSDD) are enriched in low complexity.

The protein belongs to the ubiquitin-activating E1 family. UBA5 subfamily.

Functionally, E1-like enzyme which activates UFM1. The sequence is that of Ubiquitin-like modifier-activating enzyme 5 from Aedes aegypti (Yellowfever mosquito).